We begin with the raw amino-acid sequence, 200 residues long: Coiled-coil domain-containing protein 28B (200 aa).

An N-acetylmethionine modification is found at Met1. Residues 1–10 (MEDKKKKRSP) are compositionally biased toward basic residues. The segment at 1-49 (MEDKKKKRSPKPCLTQPAQAPGTLRRVPVPTSHSGSLALGLPHLPSPKQ) is disordered. A phosphoserine mark is found at Ser46 and Ser115. Residues 140–152 (GEEEDEEEEEDGV) show a composition bias toward acidic residues. Residues 140–165 (GEEEDEEEEEDGVTEGLPEEQKKTMA) are disordered. A coiled-coil region spans residues 158 to 189 (EEQKKTMADRNLDQLLSNLEDLSNSIQKLHLA).

As to quaternary structure, interacts with BBS1, BBS2, BBS4, BBS5, BBS6, BBS7 and TTC8/BBS8. Interacts with MAPKAP1/SIN1 isoform 1 and RICTOR. In terms of tissue distribution, expressed in the retina, pericardium and limb epithelium.

The protein resides in the cytoplasm. It is found in the cytoskeleton. It localises to the microtubule organizing center. Its subcellular location is the centrosome. In terms of biological role, involved in ciliogenesis. Regulates cilia length through its interaction with MAPKAP1/SIN1 but independently of mTORC2 complex. Modulates mTORC2 complex assembly and function, possibly enhances AKT1 phosphorylation. Does not seem to modulate assembly and function of mTORC1 complex. This chain is Coiled-coil domain-containing protein 28B (Ccdc28b), found in Mus musculus (Mouse).